A 78-amino-acid chain; its full sequence is Transmembrane protein 258 (78 aa).

Over 1–18 the chain is Cytoplasmic; sequence MDVMQRYVSPVNPAVFPH. A helical membrane pass occupies residues 19-39; that stretch reads LATVLLVIGTFFTAWFFIFVV. Over 40 to 53 the chain is Cytoplasmic; that stretch reads SRKSSKESTLIKEL. The helical transmembrane segment at 54-74 threads the bilayer; that stretch reads LISLCASIFLGFGIVFLLLTV. The Perinuclear space portion of the chain corresponds to 75 to 78; it reads GIYV.

It belongs to the OST5 family. In terms of assembly, homodimer. Component of the oligosaccharyltransferase (OST) complex. Interacts with klar and Msp300, components of LINC complex.

It is found in the nucleus outer membrane. The protein localises to the cytoplasm. Its subcellular location is the endoplasmic reticulum membrane. Functionally, subunit of the oligosaccharyl transferase (OST) complex that catalyzes the initial transfer of a defined glycan (Glc(3)Man(9)GlcNAc(2) in eukaryotes) from the lipid carrier dolichol-pyrophosphate to an asparagine residue within an Asn-X-Ser/Thr consensus motif in nascent polypeptide chains, the first step in protein N-glycosylation. N-glycosylation occurs cotranslationally and the complex associates with the Sec61 complex at the channel-forming translocon complex that mediates protein translocation across the endoplasmic reticulum (ER). All subunits are required for a maximal enzyme activity. In addition may regulates nuclear envelope (NE) architecture and nuclear positioning through the linker of nucleoskeleton and cytoskeleton (LINC)-dependent and -independent mechanisms. The chain is Transmembrane protein 258 from Drosophila melanogaster (Fruit fly).